The following is a 1233-amino-acid chain: Glutamate receptor ionotropic, NMDA 2C (1233 aa).

The N-terminal stretch at 1-19 (MGGALGPALLLTSLFGAWA) is a signal peptide. Over 20–554 (GLGPGQGEQG…SAFLEPYSPA (535 aa)) the chain is Extracellular. 2 N-linked (GlcNAc...) asparagine glycosylation sites follow: Asn-70 and Asn-73. Cysteines 82 and 317 form a disulfide. 2 N-linked (GlcNAc...) asparagine glycosylation sites follow: Asn-337 and Asn-438. Intrachain disulfides connect Cys-426/Cys-453 and Cys-433/Cys-454. Residues Ser-509, Thr-511, and Arg-516 each contribute to the L-glutamate site. An N-linked (GlcNAc...) asparagine glycan is attached at Asn-539. Residues 555-575 (VWVMMFVMCLTVVAITVFMFE) traverse the membrane as a helical segment. At 576-598 (YFSPVSYNQNLTRGKKSGGPAFT) the chain is on the cytoplasmic side. The segment at residues 599–611 (IGKSVWLLWALVF) is an intramembrane region (discontinuously helical). Residues 601–620 (KSVWLLWALVFNNSVPIENP) are pore-forming. Over 612–626 (NNSVPIENPRGTTSK) the chain is Cytoplasmic. Residues 627–644 (IMVLVWAFFAVIFLASYT) form a helical membrane-spanning segment. Topologically, residues 645–813 (ANLAAFMIQE…EVMSSKLDID (169 aa)) are extracellular. A glycan (N-linked (GlcNAc...) asparagine) is linked at Asn-685. L-glutamate is bound by residues Ser-687, Thr-688, and Asp-729. A disulfide bridge links Cys-743 with Cys-798. A helical transmembrane segment spans residues 814–836 (NMAGVFYMLLVAMGLALLVFAWE). Over 837–1233 (HLVYWKLRHS…RRISSLESEV (397 aa)) the chain is Cytoplasmic. Phosphoserine occurs at positions 875, 881, and 912. The disordered stretch occupies residues 920-994 (IENWGGGRRA…GPPLSDVSRV (75 aa)). Composition is skewed to pro residues over residues 929–956 (APPPSPCPTPRSGPSPCLPTPDPPPEPS) and 975–987 (PQPPGRPPTPGPP). The PDZ-binding signature appears at 1231–1233 (SEV).

Belongs to the glutamate-gated ion channel (TC 1.A.10.1) family. NR2C/GRIN2C subfamily. As to quaternary structure, heterotetramer. Forms heterotetrameric channels composed of two GluN1/zeta subunits (GRIN1), and two identical GluN2/epsilon subunits (GRIN2A, GRIN2B, GRIN2C or GRIN2D) or GluN3 subunits (GRIN3A or GRIN3B) (in vitro). In vivo, the subunit composition may depend on the expression levels of the different subunits. Interacts with PDZ domains of PATJ and DLG4. Interacts (via PDZ-binding motif) with SNX27 (via PDZ domain); the interaction is required for recycling to the plasma membrane when endocytosed and prevent degradation in lysosomes. As to expression, mainly expressed in brain with predominant expression is in the cerebellum, also present in the hippocampus, amygdala, caudate nucleus, corpus callosum, subthalamic nuclei and thalamus. Detected in the heart, skeletal muscle and pancreas.

The protein resides in the cell membrane. It localises to the postsynaptic cell membrane. It catalyses the reaction Ca(2+)(in) = Ca(2+)(out). The enzyme catalyses Na(+)(in) = Na(+)(out). The catalysed reaction is K(+)(in) = K(+)(out). In terms of biological role, component of N-methyl-D-aspartate (NMDA) receptors (NMDARs) that function as heterotetrameric, ligand-gated cation channels with high calcium permeability and voltage-dependent block by Mg(2+). Participates in synaptic plasticity for learning and memory formation by contributing to the slow phase of excitatory postsynaptic current and long-term synaptic potentiation. Channel activation requires binding of the neurotransmitter L-glutamate to the GluN2 subunit, glycine or D-serine binding to the GluN1 subunit, plus membrane depolarization to eliminate channel inhibition by Mg(2+). NMDARs mediate simultaneously the potasium efflux and the influx of calcium and sodium. Each GluN2 subunit confers differential attributes to channel properties, including activation, deactivation and desensitization kinetics, pH sensitivity, Ca2(+) permeability, and binding to allosteric modulators. This chain is Glutamate receptor ionotropic, NMDA 2C, found in Homo sapiens (Human).